The following is a 1023-amino-acid chain: Sodium/potassium-transporting ATPase subunit alpha-1 (1023 aa).

A propeptide spanning residues 1-5 (MAFKV) is cleaved from the precursor. Residues 1-11 (MAFKVGRDKYE) are compositionally biased toward basic and acidic residues. The disordered stretch occupies residues 1 to 38 (MAFKVGRDKYEPAAVSEQGDKKGKKGKKDRDMDELKKE). The Cytoplasmic segment spans residues 6–87 (GRDKYEPAAV…NALTPPPTTP (82 aa)). The residue at position 9 (lysine 9) is an N6-acetyllysine. Residue tyrosine 10 is modified to Phosphotyrosine. Serine 16 is modified (phosphoserine; by PKC). N6-acetyllysine is present on lysine 21. The span at 28-38 (KDRDMDELKKE) shows a compositional bias: basic and acidic residues. Serine 40 and serine 47 each carry phosphoserine. The segment at 82 to 84 (PPP) is phosphoinositide-3 kinase binding. Residues 88-108 (EWIKFCRQLFGGFSMLLWIGA) form a helical membrane-spanning segment. At 109 to 131 (ILCFLAYSIQAATEEEPQNDNLY) the chain is on the extracellular side. Residues 132 to 152 (LGVVLSAVVIITGCFSYYQEA) traverse the membrane as a helical segment. Over 153–288 (KSSKIMESFK…GGQTPIAAEI (136 aa)) the chain is Cytoplasmic. The interval 216-235 (SSLTGESEPQTRSPDFTNEN) is disordered. Serine 228 carries the phosphoserine modification. At tyrosine 260 the chain carries Phosphotyrosine. The helical transmembrane segment at 289 to 308 (EHFIHIITGVAVFLGVSFFI) threads the bilayer. At 309–320 (LSLILEYTWLEA) the chain is on the extracellular side. Residues 321-338 (VIFLIGIIVANVPEGLLA) traverse the membrane as a helical segment. The Cytoplasmic portion of the chain corresponds to 339–772 (TVTVCLTLTA…EEGRLIFDNL (434 aa)). Aspartate 376 functions as the 4-aspartylphosphate intermediate in the catalytic mechanism. Phosphoserine occurs at positions 452 and 484. Lysine 487 lines the ATP pocket. The residue at position 542 (tyrosine 542) is a Phosphotyrosine. The mediates interaction with SCN7A stretch occupies residues 596 to 717 (RAAVPDAVGK…QGAIVAVTGD (122 aa)). An N6-succinyllysine modification is found at lysine 661. Residues serine 668 and serine 675 each carry the phosphoserine modification. Mg(2+) contacts are provided by aspartate 717 and aspartate 721. A helical transmembrane segment spans residues 773-792 (KKSIAYTLTSNIPEITPFLI). The Extracellular portion of the chain corresponds to 793 to 802 (FIIANIPLPL). A helical membrane pass occupies residues 803–823 (GTVTILCIDLGTDMVPAISLA). Residues 824–843 (YEQAESDIMKRQPRNPKTDK) lie on the Cytoplasmic side of the membrane. A helical membrane pass occupies residues 844-866 (LVNERLISTAYGQIGMIQALGGF). Residues 867-918 (FTYFVILAENGFLPLHLLGLRVDWDDRWINDVEDSYGQQWTYEQRKIVEFTC) are Extracellular-facing. Residues 919–938 (HTAFFVSIVVVQWADLVICK) form a helical membrane-spanning segment. Topologically, residues 939–951 (TRRNSVFQQGMKN) are cytoplasmic. A Phosphoserine; by PKA modification is found at serine 943. Residues 952–970 (KILIFGLFEETALAAFLSY) form a helical membrane-spanning segment. Topologically, residues 971–985 (CPGMGVALRMYPLKP) are extracellular. Residues 986-1006 (TWWFCAFPYSLLIFVYDEVRK) traverse the membrane as a helical segment. The Cytoplasmic portion of the chain corresponds to 1007 to 1023 (LIIRRRPGGWVEKETYY).

The protein belongs to the cation transport ATPase (P-type) (TC 3.A.3) family. Type IIC subfamily. As to quaternary structure, the sodium/potassium-transporting ATPase is composed of a catalytic alpha subunit, an auxiliary non-catalytic beta subunit and an additional regulatory subunit. Interacts with regulatory subunit FXYD1. Interacts with regulatory subunit FXYD3. Interacts with SIK1. Interacts with SLC35G1 and STIM1. Interacts with CLN3; this interaction regulates the sodium/potassium-transporting ATPase complex localization at the plasma membrane. Interacts with SCN7A; activates ATP1A1 P-type sodium:potassium-exchanging transporter activity which indirectly signals to nearby neurons to regulate sodium homeostasis. Phosphorylation on Tyr-10 modulates pumping activity. Phosphorylation of Ser-943 by PKA modulates the response of ATP1A1 to PKC. Dephosphorylation by protein phosphatase 2A (PP2A) following increases in intracellular sodium, leading to increase catalytic activity.

The protein localises to the cell membrane. It is found in the basolateral cell membrane. Its subcellular location is the sarcolemma. It localises to the cell projection. The protein resides in the axon. The protein localises to the melanosome. The catalysed reaction is K(+)(out) + Na(+)(in) + ATP + H2O = K(+)(in) + Na(+)(out) + ADP + phosphate + H(+). In terms of biological role, this is the catalytic component of the active enzyme, which catalyzes the hydrolysis of ATP coupled with the exchange of sodium and potassium ions across the plasma membrane. This action creates the electrochemical gradient of sodium and potassium ions, providing the energy for active transport of various nutrients. Could also be part of an osmosensory signaling pathway that senses body-fluid sodium levels and controls salt intake behavior as well as voluntary water intake to regulate sodium homeostasis. The chain is Sodium/potassium-transporting ATPase subunit alpha-1 (ATP1A1) from Pongo abelii (Sumatran orangutan).